Consider the following 124-residue polypeptide: Small ribosomal subunit protein uS13 (124 aa).

The tract at residues 94-124 (GLPLRGQRTKNNSRTRKGRRKTVANKKKATK) is disordered. Over residues 100–124 (QRTKNNSRTRKGRRKTVANKKKATK) the composition is skewed to basic residues.

Belongs to the universal ribosomal protein uS13 family. As to quaternary structure, part of the 30S ribosomal subunit. Forms a loose heterodimer with protein S19. Forms two bridges to the 50S subunit in the 70S ribosome.

In terms of biological role, located at the top of the head of the 30S subunit, it contacts several helices of the 16S rRNA. In the 70S ribosome it contacts the 23S rRNA (bridge B1a) and protein L5 of the 50S subunit (bridge B1b), connecting the 2 subunits; these bridges are implicated in subunit movement. Contacts the tRNAs in the A and P-sites. This is Small ribosomal subunit protein uS13 from Christiangramia forsetii (strain DSM 17595 / CGMCC 1.15422 / KT0803) (Gramella forsetii).